The chain runs to 190 residues: Syndecan-2-B (190 aa).

Residues 1–22 form the signal peptide; the sequence is MRNVWLIVPFALLAAFSGETWA. Residues 23–136 are Extracellular-facing; it reads QADRDLYIDS…NLFHRTEVLA (114 aa). The interval 34–60 is disordered; sequence ESSGNYPVDDDDYSSGSGSGIPAHDDD. O-linked (Xyl...) (glycosaminoglycan) serine glycans are attached at residues S36, S48, S50, and S52. Residues 137–157 traverse the membrane as a helical segment; that stretch reads AVIAGGGIGFLFAVFLILLLV. At 158–190 the chain is on the cytoplasmic side; the sequence is YRMRKKDEGSYDLGERKPSSAVYQKAPTKEFYA. Residues 167–190 form a disordered region; that stretch reads SYDLGERKPSSAVYQKAPTKEFYA.

This sequence belongs to the syndecan proteoglycan family. In terms of processing, O-glycosylated; contains both heparan sulfate and chondroitin sulfate.

It is found in the membrane. Functionally, cell surface proteoglycan. This Xenopus laevis (African clawed frog) protein is Syndecan-2-B (sdc2-b).